The primary structure comprises 149 residues: Transcriptional repressor NrdR (149 aa).

A zinc finger spans residues 3–34; the sequence is CPFCSATDTKVIDSRLVADGHQVRRRRECVQC. The ATP-cone domain maps to 49–139; it reads PRVVKQDGSR…VYRAFEDVSE (91 aa).

Belongs to the NrdR family. Zn(2+) serves as cofactor.

Its function is as follows. Negatively regulates transcription of bacterial ribonucleotide reductase nrd genes and operons by binding to NrdR-boxes. This chain is Transcriptional repressor NrdR, found in Shewanella pealeana (strain ATCC 700345 / ANG-SQ1).